We begin with the raw amino-acid sequence, 503 residues long: WAS/WASL-interacting protein family member 1 (503 aa).

The segment covering 1–14 has biased composition (pro residues); it reads MPVPPPPAPPPPPT. The interval 1–503 is disordered; the sequence is MPVPPPPAPP…GAPPLPPIPR (503 aa). Residues 21–31 are compositionally biased toward polar residues; that stretch reads EKPTLNKTEQA. Residues 32 to 49 enclose the WH2 domain; it reads GRNALLSDISKGKKLKKT. Arginine 33 carries the asymmetric dimethylarginine modification. A binds actin region spans residues 45–48; that stretch reads KLKK. The segment covering 65–104 has biased composition (gly residues); that stretch reads AGAGGGGGGFGGGGGFGGGGGGGGGGSFGGGGPPGLGGLF. Residues 121-137 show a composition bias toward low complexity; sequence SGGSRPPLLPPGGRSTS. Omega-N-methylarginine occurs at positions 125 and 134. 4 stretches are compositionally biased toward pro residues: residues 141–154, 161–174, 182–191, and 204–223; these read FSPPSGPGRFPVPS, PPEPQRNRMPPPRP, SIPPPVPSTP, and PPVPGGPRQPSPGPTPPPFP. Phosphoserine is present on serine 142. Serine 234 bears the Phosphoserine mark. The segment covering 238–247 has biased composition (low complexity); sequence SPLSSSSPFS. Pro residues-rich tracts occupy residues 282 to 298 and 306 to 323; these read VPPPPPQNNKPPVPSTP and APPPPPPPSRPGPPPLPP. Position 340 is a phosphoserine (serine 340). At threonine 345 the chain carries Phosphothreonine. Pro residues predominate over residues 346–371; it reads PPLPSPGRSGPLPPPPSERPPPPVRD. Phosphoserine is present on serine 350. XRSGPXPPXP motif repeat units lie at residues 352-361, 374-383, and 410-419; these read GRSGPLPPPP and PRSGPRPPLP. The span at 413-434 shows a compositional bias: pro residues; sequence GPRPPLPPDRPSAGAPPPPPPS. A compositionally biased stretch (basic and acidic residues) spans 480-494; sequence ARNESRSGSNRRERG.

This sequence belongs to the verprolin family. In terms of assembly, binds to WAS, profilin and actin. Binds to WASL. Interacts with DBNL. Interacts with FNBP1L (via the SH3 domain). As to expression, highly expressed in peripheral blood mononuclear cells, spleen, placenta, small intestine, colon and thymus. Lower expression in ovary, heart, brain, lung, liver, skeletal muscle, kidney, pancreas, prostate and testis.

It is found in the cytoplasmic vesicle. The protein resides in the cytoplasm. The protein localises to the cytoskeleton. Its subcellular location is the cell projection. It localises to the ruffle. Its function is as follows. Plays a role in the reorganization of the actin cytoskeleton. Contributes with NCK1 and GRB2 in the recruitment and activation of WASL. May participate in regulating the subcellular localization of WASL, resulting in the disassembly of stress fibers in favor of filopodia formation. Plays a role in the formation of cell ruffles. Plays an important role in the intracellular motility of vaccinia virus by functioning as an adapter for recruiting WASL to vaccinia virus. This Homo sapiens (Human) protein is WAS/WASL-interacting protein family member 1 (WIPF1).